Here is a 656-residue protein sequence, read N- to C-terminus: MINPSTKVSTKVLDKKYNFKIEYKLIKNKDLLKSRLSEIPKSSGCYLFKDIDNNLLYIGKSKTLRNRVSSYFNNYAELSPRLSLMVRQITEIEIIVTDSEYEALNLESNLIKTNKPYFNILLKDDKKYPYLCITWSEQYPRIFITRKRRNRNNFDRYYGPYVDVGLLRKTLFIIKKIFPLRQRPRPVYKDRTCLNYSIGRCPGVCQEIISSEDYKKTMKQVSMIFQGRNDDLEVFLERKMNQYSNDLEFENAAKIRDQISGLKLLTESQKISIPDSSINRDIFGIVSENNISSIQIFQMRSGKLIGRIGYTQKIDNSDETEILQRVLEEHYINVEGVEIPSEILLQFNLPKHNTIEEWLSELRQKKVKLIIPKRNKKFETVEMVLKNAKLELERILNGIQDNESSIEDLTQILELTNQPRRIEGYDISHIQGTDPVASQVVFIDGIPSKQNYRKYKIKDPNIFIGHSDDFASIYEVIYRRFKKWSKFKIDGGDISSLQDKKKSTLENDLLTDWPDLIMIDGGKGQLNAALKALTQLDLHEEVNICSLAKKNEEIFIPGFSKSLDTDQNQKGLLLLRRVRDEAHRFALSFHRNKRSARMNRSQLSQIPGLGPSRIKDLLEHFNSIDAIRIASREELSKVKGLGMHSANDIYNYFNEL.

The region spanning 41–120 is the GIY-YIG domain; the sequence is KSSGCYLFKD…IKTNKPYFNI (80 aa). The region spanning 230 to 265 is the UVR domain; sequence DDLEVFLERKMNQYSNDLEFENAAKIRDQISGLKLL.

This sequence belongs to the UvrC family. In terms of assembly, interacts with UvrB in an incision complex.

The protein resides in the cytoplasm. Its function is as follows. The UvrABC repair system catalyzes the recognition and processing of DNA lesions. UvrC both incises the 5' and 3' sides of the lesion. The N-terminal half is responsible for the 3' incision and the C-terminal half is responsible for the 5' incision. In Prochlorococcus marinus subsp. pastoris (strain CCMP1986 / NIES-2087 / MED4), this protein is UvrABC system protein C.